The chain runs to 327 residues: Acetyl-coenzyme A carboxylase carboxyl transferase subunit beta (327 aa).

The CoA carboxyltransferase N-terminal domain occupies 24 to 293; sequence LWIKCPDTGQ…LTVTTAVEAP (270 aa). Positions 293 to 311 are enriched in low complexity; that stretch reads PAEAAAKAEPEATTTEQPV. Positions 293–327 are disordered; the sequence is PAEAAAKAEPEATTTEQPVAPAPTEPPAQPAAPQA. A compositionally biased stretch (pro residues) spans 312-327; the sequence is APAPTEPPAQPAAPQA.

The protein belongs to the AccD/PCCB family. Acetyl-CoA carboxylase is a heterohexamer composed of biotin carboxyl carrier protein (AccB), biotin carboxylase (AccC) and two subunits each of ACCase subunit alpha (AccA) and ACCase subunit beta (AccD).

The protein resides in the cytoplasm. The catalysed reaction is N(6)-carboxybiotinyl-L-lysyl-[protein] + acetyl-CoA = N(6)-biotinyl-L-lysyl-[protein] + malonyl-CoA. The protein operates within lipid metabolism; malonyl-CoA biosynthesis; malonyl-CoA from acetyl-CoA: step 1/1. Functionally, component of the acetyl coenzyme A carboxylase (ACC) complex. Biotin carboxylase (BC) catalyzes the carboxylation of biotin on its carrier protein (BCCP) and then the CO(2) group is transferred by the transcarboxylase to acetyl-CoA to form malonyl-CoA. This chain is Acetyl-coenzyme A carboxylase carboxyl transferase subunit beta, found in Rhodopseudomonas palustris (strain TIE-1).